Reading from the N-terminus, the 1108-residue chain is Transmembrane protein 132C (1108 aa).

Positions 1 to 27 (MRSEGAAPGPAAPLCGALSLLLGALLG) are cleaved as a signal peptide. Over 28-922 (KVIEGHGVTD…LVQTPRGLSD (895 aa)) the chain is Extracellular. 2 N-linked (GlcNAc...) asparagine glycosylation sites follow: N316 and N373. Over residues 820–836 (HASDRRQKGQHHERTGQ) the composition is skewed to basic and acidic residues. The disordered stretch occupies residues 820-857 (HASDRRQKGQHHERTGQDGHLYGSSPVEREEGALRRAT). A helical transmembrane segment spans residues 923 to 943 (LEIGMYALLGVFCLAILVFLI). Topologically, residues 944–1108 (NCATFALKYR…NYLEKLKDKA (165 aa)) are cytoplasmic. The tract at residues 1022-1072 (QSQIHRSADSGGRQGREQKQDPLHSPTSKRKKVKFTTFTTIPPDDSCPTVN) is disordered.

This sequence belongs to the TMEM132 family.

It localises to the membrane. In Homo sapiens (Human), this protein is Transmembrane protein 132C (TMEM132C).